We begin with the raw amino-acid sequence, 856 residues long: Leucine--tRNA ligase (856 aa).

A 'HIGH' region motif is present at residues 42 to 52; it reads PYPSGNLHMGH. The short motif at 617–621 is the 'KMSKS' region element; it reads KMSKS. Residue lysine 620 coordinates ATP.

It belongs to the class-I aminoacyl-tRNA synthetase family.

It is found in the cytoplasm. The enzyme catalyses tRNA(Leu) + L-leucine + ATP = L-leucyl-tRNA(Leu) + AMP + diphosphate. This Rippkaea orientalis (strain PCC 8801 / RF-1) (Cyanothece sp. (strain PCC 8801)) protein is Leucine--tRNA ligase.